Here is a 512-residue protein sequence, read N- to C-terminus: Serine/threonine-protein kinase grp (512 aa).

A Protein kinase domain is found at 22-279; the sequence is WTLAQTLGEG…LEKTLDHKWC (258 aa). Residues 28–36 and lysine 51 contribute to the ATP site; that span reads LGEGAYGEV. The Proton acceptor role is filled by aspartate 143. Residues 335-360 form a disordered region; the sequence is PTMRSDDDFNVRLGSGRSKEDGGDRQ.

This sequence belongs to the protein kinase superfamily. CAMK Ser/Thr protein kinase family. NIM1 subfamily. Post-translationally, phosphorylated in a MEI-41/ATR dependent manner in response to DNA damage or the presence of unreplicated DNA.

It is found in the nucleus. It carries out the reaction L-seryl-[protein] + ATP = O-phospho-L-seryl-[protein] + ADP + H(+). It catalyses the reaction L-threonyl-[protein] + ATP = O-phospho-L-threonyl-[protein] + ADP + H(+). Serine/threonine-protein kinase which is required for checkpoint-mediated cell cycle arrest and activation of DNA repair in response to the presence of DNA damage or unreplicated DNA. May also negatively regulate cell cycle progression during unperturbed cell cycles. May phosphorylate the CDC25 phosphatase stg, which promotes its degradation. This results in increased inhibitory tyrosine phosphorylation of Cdk1-cyclin complexes and consequent inhibition of cell cycle progression. The polypeptide is Serine/threonine-protein kinase grp (Drosophila melanogaster (Fruit fly)).